The following is a 306-amino-acid chain: Ornithine carbamoyltransferase (306 aa).

Carbamoyl phosphate contacts are provided by residues serine 53–threonine 56, glutamine 80, arginine 104, and histidine 131–glutamine 134. L-ornithine is bound by residues asparagine 162, aspartate 219, and serine 223–methionine 224. Carbamoyl phosphate-binding positions include cysteine 259–leucine 260 and arginine 287.

The protein belongs to the aspartate/ornithine carbamoyltransferase superfamily. OTCase family.

It is found in the cytoplasm. The enzyme catalyses carbamoyl phosphate + L-ornithine = L-citrulline + phosphate + H(+). The protein operates within amino-acid degradation; L-arginine degradation via ADI pathway; carbamoyl phosphate from L-arginine: step 2/2. Its function is as follows. Reversibly catalyzes the transfer of the carbamoyl group from carbamoyl phosphate (CP) to the N(epsilon) atom of ornithine (ORN) to produce L-citrulline. This chain is Ornithine carbamoyltransferase, found in Acinetobacter baumannii (strain AYE).